Reading from the N-terminus, the 294-residue chain is Transmembrane protein 178B (294 aa).

An N-terminal signal peptide occupies residues Met1–Ala23. 3 helical membrane passes run Ala172–Gly192, Leu206–Ile226, and Met252–Ala272.

This sequence belongs to the TMEM178 family.

The protein resides in the membrane. The sequence is that of Transmembrane protein 178B (tmem178b) from Danio rerio (Zebrafish).